A 475-amino-acid chain; its full sequence is Cytochrome P450 monooxygenase sthD (475 aa).

The first 17 residues, 1 to 17 (MAAYFLLGLYGSTLVYR), serve as a signal peptide directing secretion. Residues 276–296 (FIIIAGSDTVAATLTFAFFYL) form a helical membrane-spanning segment. The N-linked (GlcNAc...) asparagine glycan is linked to asparagine 336. Cysteine 418 lines the heme pocket.

It belongs to the cytochrome P450 family. The cofactor is heme.

It is found in the membrane. The enzyme catalyses betaenone A + NADPH + O2 + H(+) = stemphyloxin II + NADP(+) + H2O. The catalysed reaction is betaenone C + NADPH + O2 + H(+) = stemphyloxin I + NADP(+) + H2O. It participates in mycotoxin biosynthesis. Its function is as follows. Cytochrome P450 monooxygenase; part of the gene cluster that mediates the biosynthesis of the phytotoxin stemphyloxin II. The first step of the pathway is the synthesis of dehydroprobetaenone I by the polyketide synthase sthA and the enoyl reductase sthE via condensation of one acetyl-CoA starter unit with 7 malonyl-CoA units and 5 methylations. The C-terminal reductase (R) domain of sthA catalyzes the reductive release of the polyketide chain. Because sthA lacks a designated enoylreductase (ER) domain, the required activity is provided the enoyl reductase sthE. The short-chain dehydrogenase/reductase sthC then catalyzes reduction of dehydroprobetaenone I to probetaenone I. The cytochrome P450 monooxygenase sthF catalyzes successive epoxidation, oxidation (resulting from epoxide opening) and hydroxylation to install a tertiary alcohol in the decaline ring to yield betaenone C from dehydroprobetaenone I and betaenone B from probetaenone I. The FAD-linked oxidoreductase sthB is responsible for the conversion of betaenone C to betaenone A via an intramolecular aldol reaction between C-1 and C-17 to form the bridged tricyclic system in betaenone A. Finally, the cytochrome P450 monooxygenase sthD catalyzes the hydroxylation of C-15 to afford the final metabolite stemphyloxin II. This Phaeosphaeria nodorum (strain SN15 / ATCC MYA-4574 / FGSC 10173) (Glume blotch fungus) protein is Cytochrome P450 monooxygenase sthD.